The sequence spans 395 residues: Protein PIN-LIKES 7 (395 aa).

Residues 1-8 (MGFLELLE) lie on the Lumenal side of the membrane. Residues 9–29 (VASMPIVQVLLISVLGAFLAT) traverse the membrane as a helical segment. Topologically, residues 30 to 45 (DYCSLLSADTRRSVNK) are cytoplasmic. A helical transmembrane segment spans residues 46 to 66 (LVFVVFTPCIMFANLAETVTL). Residues 67–73 (QDIISWW) lie on the Lumenal side of the membrane. A helical transmembrane segment spans residues 74-94 (FMPINVGITFLVGGILGWLVV). Topologically, residues 95–106 (KLLNPKPQLHGL) are cytoplasmic. Residues 107 to 127 (IIATCASGNMGNLMLILVPAI) form a helical membrane-spanning segment. At 128-142 (CDEEGSPFGNRSVCR) the chain is on the lumenal side. Residues 143 to 163 (SIGLSYASFSMALGGFYIWTY) traverse the membrane as a helical segment. Residues 164–232 (SYQLVRSSAT…KDLLHQILEE (69 aa)) lie on the Cytoplasmic side of the membrane. A helical membrane pass occupies residues 233 to 253 (LFAPPTIGAILGFVFGATNWL). The Lumenal portion of the chain corresponds to 254 to 272 (RNLIIGENAPLRVIQDSVK). Residues 273-293 (LLGEGTIPCITLILGGNLIQG) form a helical membrane-spanning segment. The Cytoplasmic segment spans residues 294–302 (LRSSAVKKS). Residues 303–323 (VIVGVIIVRYILLPVVGVGVV) traverse the membrane as a helical segment. The Lumenal segment spans residues 324 to 340 (QLAGNLGYLPPDPLFRY). Residues 341 to 361 (VLMLQFALPPAMNISTMAQLF) form a helical membrane-spanning segment. Residues 362–369 (DVAQDECS) lie on the Cytoplasmic side of the membrane. Residues 370–390 (VIFLWTYLVASLALTVWSTIF) traverse the membrane as a helical segment. The Lumenal segment spans residues 391–395 (LSILS).

The protein belongs to the auxin efflux carrier (TC 2.A.69.2) family. In terms of tissue distribution, expressed in seedlings, rosette and cauline leaves, stems and flowers.

The protein localises to the endoplasmic reticulum membrane. In terms of biological role, involved in cellular auxin homeostasis by regulating auxin metabolism. Regulates intracellular auxin accumulation at the endoplasmic reticulum and thus auxin availability for nuclear auxin signaling. This chain is Protein PIN-LIKES 7, found in Arabidopsis thaliana (Mouse-ear cress).